The following is a 207-amino-acid chain: Large ribosomal subunit protein bL25 (207 aa).

Residues 171-207 are disordered; sequence EEETVVTVSAPRAEEEPTTTEAPEPEAVHGKDEEPVE. Residues 196 to 207 are compositionally biased toward basic and acidic residues; it reads EAVHGKDEEPVE.

Belongs to the bacterial ribosomal protein bL25 family. CTC subfamily. Part of the 50S ribosomal subunit; part of the 5S rRNA/L5/L18/L25 subcomplex. Contacts the 5S rRNA. Binds to the 5S rRNA independently of L5 and L18.

Its function is as follows. This is one of the proteins that binds to the 5S RNA in the ribosome where it forms part of the central protuberance. This Listeria monocytogenes serotype 4b (strain F2365) protein is Large ribosomal subunit protein bL25.